The following is a 271-amino-acid chain: Autophagy-related protein 5 (271 aa).

A Glycyl lysine isopeptide (Lys-Gly) (interchain with G-Cter in ATG12) cross-link involves residue lysine 145.

The protein belongs to the ATG5 family. As to quaternary structure, conjugated with ATG12. Interacts with ATG10. The ATG5-ATG12 conjugate forms a complex with several units of ATG16. The ATG12-ATG5 conjugate also associates with ATG3. Post-translationally, conjugated to ATG12; which is essential for autophagy. Conjugation with ATG12 involves ATG7 as an E1-like activating enzyme and ATG10 as an E2-like conjugating enzyme.

The protein resides in the preautophagosomal structure membrane. Functionally, involved in cytoplasm to vacuole transport (Cvt) and autophagic vesicle formation. Autophagy is essential for maintenance of amino acid levels and protein synthesis under nitrogen starvation. Required for selective autophagic degradation of the nucleus (nucleophagy). Also required for mitophagy, which eliminates defective or superfluous mitochondria in order to fulfill cellular energy requirements and prevent excess ROS production. Conjugation with ATG12, through a ubiquitin-like conjugating system involving ATG7 as an E1-like activating enzyme and ATG10 as an E2-like conjugating enzyme, is essential for its function. The ATG12-ATG5 conjugate acts as an E3-like enzyme which is required for lipidation of ATG8 and ATG8 association to the vesicle membranes. ATG12-ATG5 rearranges the ATG3 catalytic center and enhances its E2 activity. The sequence is that of Autophagy-related protein 5 from Kluyveromyces marxianus (strain DMKU3-1042 / BCC 29191 / NBRC 104275) (Yeast).